We begin with the raw amino-acid sequence, 455 residues long: tRNA modification GTPase MnmE (455 aa).

Positions 24, 81, and 120 each coordinate (6S)-5-formyl-5,6,7,8-tetrahydrofolate. In terms of domain architecture, TrmE-type G spans 216–378 (GMTVVIAGRP…LREHLKACMG (163 aa)). Asn226 provides a ligand contact to K(+). Residues 226 to 231 (NAGKSS), 245 to 251 (TDIAGTT), 270 to 273 (DTAG), 335 to 338 (NKAD), and 359 to 361 (SAR) contribute to the GTP site. Ser230 serves as a coordination point for Mg(2+). K(+)-binding residues include Thr245, Ile247, and Thr250. Thr251 provides a ligand contact to Mg(2+). Lys455 is a (6S)-5-formyl-5,6,7,8-tetrahydrofolate binding site.

It belongs to the TRAFAC class TrmE-Era-EngA-EngB-Septin-like GTPase superfamily. TrmE GTPase family. As to quaternary structure, homodimer. Heterotetramer of two MnmE and two MnmG subunits. Requires K(+) as cofactor.

The protein resides in the cytoplasm. Its function is as follows. Exhibits a very high intrinsic GTPase hydrolysis rate. Involved in the addition of a carboxymethylaminomethyl (cmnm) group at the wobble position (U34) of certain tRNAs, forming tRNA-cmnm(5)s(2)U34. The polypeptide is tRNA modification GTPase MnmE (Pseudomonas paraeruginosa (strain DSM 24068 / PA7) (Pseudomonas aeruginosa (strain PA7))).